We begin with the raw amino-acid sequence, 285 residues long: Bifunctional protein FolD (285 aa).

Residues 165-167 (GRS) and Ser190 contribute to the NADP(+) site.

Belongs to the tetrahydrofolate dehydrogenase/cyclohydrolase family. Homodimer.

The enzyme catalyses (6R)-5,10-methylene-5,6,7,8-tetrahydrofolate + NADP(+) = (6R)-5,10-methenyltetrahydrofolate + NADPH. The catalysed reaction is (6R)-5,10-methenyltetrahydrofolate + H2O = (6R)-10-formyltetrahydrofolate + H(+). It participates in one-carbon metabolism; tetrahydrofolate interconversion. Catalyzes the oxidation of 5,10-methylenetetrahydrofolate to 5,10-methenyltetrahydrofolate and then the hydrolysis of 5,10-methenyltetrahydrofolate to 10-formyltetrahydrofolate. This is Bifunctional protein FolD from Burkholderia pseudomallei (strain 1106a).